A 202-amino-acid chain; its full sequence is NAD(P)H dehydrogenase (quinone) 2 (202 aa).

Residues 4-190 (VLVLYYSSYG…AGAFHQGEIV (187 aa)) enclose the Flavodoxin-like domain. Residues 10–15 (SSYGHI) and 78–80 (TRF) contribute to the FMN site. Tyr12 contributes to the NAD(+) binding site. Trp98 serves as a coordination point for substrate. Residues 113–119 (STGTQHG) and His134 contribute to the FMN site.

The protein belongs to the WrbA family. The cofactor is FMN.

The enzyme catalyses a quinone + NADH + H(+) = a quinol + NAD(+). It carries out the reaction a quinone + NADPH + H(+) = a quinol + NADP(+). In Rhizobium meliloti (strain 1021) (Ensifer meliloti), this protein is NAD(P)H dehydrogenase (quinone) 2.